The sequence spans 383 residues: uncharacterized protein (383 aa).

Belongs to the peptidase M20 family.

This is an uncharacterized protein from Staphylococcus aureus (strain N315).